The chain runs to 430 residues: MLDPNLLRNEPDAVAEKLARRGYKLDVDTLRAHEERRKVLQVETENLQAERNSRSKSIGQAKARGEDIEPLRQEVNALGERLDAAKAELDALLTCINDFSMAIPNIPADVVPLGKDDSENQEISRWGEPRQFDFTVRDHVELGEMAAGLDFAAAVKLTGSRFIVMKGQIALMHRALSQFMLDLHTEQHGYQETYVPYLVNHASLYGTGQLPKFGEDLFHTRPLDEEASSSNYALIPTSEVPLTNLVRDEILEEETLPLKMTAHTPCFRSEAGAYGRDTRGLIRMHQFDKVEMVHITRPEDSMDALEELVGHAEKVLQLLNLPYRKVLLCTGDMGFGAQKTYDLEVWLPAQDTYREISSCSNMGDFQARRMKARCRPRGESKTRLVHTLNGSGLAVGRTLVAVLENYQQADGRIEVPEVLRPYMKGLHFIG.

The span at Glu45–Ile58 shows a compositional bias: polar residues. Residues Glu45–Gly65 are disordered. Thr237–Glu239 contacts L-serine. Arg268–Glu270 serves as a coordination point for ATP. Residue Glu291 participates in L-serine binding. Glu355–Ser358 lines the ATP pocket. L-serine is bound at residue Ser391.

It belongs to the class-II aminoacyl-tRNA synthetase family. Type-1 seryl-tRNA synthetase subfamily. In terms of assembly, homodimer. The tRNA molecule binds across the dimer.

It is found in the cytoplasm. It catalyses the reaction tRNA(Ser) + L-serine + ATP = L-seryl-tRNA(Ser) + AMP + diphosphate + H(+). The enzyme catalyses tRNA(Sec) + L-serine + ATP = L-seryl-tRNA(Sec) + AMP + diphosphate + H(+). The protein operates within aminoacyl-tRNA biosynthesis; selenocysteinyl-tRNA(Sec) biosynthesis; L-seryl-tRNA(Sec) from L-serine and tRNA(Sec): step 1/1. Functionally, catalyzes the attachment of serine to tRNA(Ser). Is also able to aminoacylate tRNA(Sec) with serine, to form the misacylated tRNA L-seryl-tRNA(Sec), which will be further converted into selenocysteinyl-tRNA(Sec). The polypeptide is Serine--tRNA ligase (Erwinia tasmaniensis (strain DSM 17950 / CFBP 7177 / CIP 109463 / NCPPB 4357 / Et1/99)).